The sequence spans 402 residues: UDP-GlcNAc:betaGal beta-1,3-N-acetylglucosaminyltransferase 9 (402 aa).

The Cytoplasmic segment spans residues 1–10; sequence MRRRLRLRRD. A helical; Signal-anchor for type II membrane protein membrane pass occupies residues 11–27; that stretch reads ALLTLLLGASLGLLLYA. Topologically, residues 28 to 402 are lumenal; sequence QRDGAAPTAS…VAAGPFQWDS (375 aa). Low complexity predominate over residues 32–47; it reads AAPTASAPRGRGRAAP. The segment at 32-83 is disordered; that stretch reads AAPTASAPRGRGRAAPRPTPGPRAFQLPDAGAAPPAYEGDTPAPPTPTGPFD.

Belongs to the glycosyltransferase 31 family.

Its subcellular location is the golgi apparatus membrane. This chain is UDP-GlcNAc:betaGal beta-1,3-N-acetylglucosaminyltransferase 9, found in Homo sapiens (Human).